We begin with the raw amino-acid sequence, 100 residues long: Small ribosomal subunit protein uS14c (100 aa).

The protein belongs to the universal ribosomal protein uS14 family. As to quaternary structure, part of the 30S ribosomal subunit.

It is found in the plastid. Its subcellular location is the chloroplast. Binds 16S rRNA, required for the assembly of 30S particles. This Platanus occidentalis (Sycamore) protein is Small ribosomal subunit protein uS14c.